Reading from the N-terminus, the 77-residue chain is MPKLSAAELRQLSGEELRNKVRELKEELFGLRFQSATGQLENTARLREVRKDIARVYTVLQERNLNIVDDPDSTKEA.

It belongs to the universal ribosomal protein uL29 family.

This chain is Large ribosomal subunit protein uL29, found in Cutibacterium acnes (strain DSM 16379 / KPA171202) (Propionibacterium acnes).